The chain runs to 164 residues: MNFLDESFWLAVSFIIFVYLIYRPAKKAILNSLDAKILEVQEKVLKAEKLKEDAALLFEQTNAQIQKLETLRSQMIEESNEVTKKIIQEKTKEIEEFLEHKKSDAIQLIQNQKSTATKELQDEFCDEVIKLVSEYFQSAKFSESNIAKNLMDKSDSSHNNDKST.

Residues 7–25 (SFWLAVSFIIFVYLIYRPA) traverse the membrane as a helical segment.

It belongs to the ATPase B chain family. As to quaternary structure, F-type ATPases have 2 components, F(1) - the catalytic core - and F(0) - the membrane proton channel. F(1) has five subunits: alpha(3), beta(3), gamma(1), delta(1), epsilon(1). F(0) has three main subunits: a(1), b(2) and c(10-14). The alpha and beta chains form an alternating ring which encloses part of the gamma chain. F(1) is attached to F(0) by a central stalk formed by the gamma and epsilon chains, while a peripheral stalk is formed by the delta and b chains.

The protein localises to the cell inner membrane. Functionally, f(1)F(0) ATP synthase produces ATP from ADP in the presence of a proton or sodium gradient. F-type ATPases consist of two structural domains, F(1) containing the extramembraneous catalytic core and F(0) containing the membrane proton channel, linked together by a central stalk and a peripheral stalk. During catalysis, ATP synthesis in the catalytic domain of F(1) is coupled via a rotary mechanism of the central stalk subunits to proton translocation. Its function is as follows. Component of the F(0) channel, it forms part of the peripheral stalk, linking F(1) to F(0). This Rickettsia felis (strain ATCC VR-1525 / URRWXCal2) (Rickettsia azadi) protein is ATP synthase subunit b.